A 246-amino-acid polypeptide reads, in one-letter code: Phycocyanobilin:ferredoxin oxidoreductase (246 aa).

This sequence belongs to the HY2 family.

It carries out the reaction (2R,3Z)-phycocyanobilin + 4 oxidized [2Fe-2S]-[ferredoxin] = biliverdin IXalpha + 4 reduced [2Fe-2S]-[ferredoxin] + 4 H(+). In terms of biological role, catalyzes the four-electron reduction of biliverdin IX-alpha (2-electron reduction at both the A and D rings); the reaction proceeds via an isolatable 2-electron intermediate, 181,182-dihydrobiliverdin. The sequence is that of Phycocyanobilin:ferredoxin oxidoreductase from Crocosphaera subtropica (strain ATCC 51142 / BH68) (Cyanothece sp. (strain ATCC 51142)).